A 357-amino-acid chain; its full sequence is Prostaglandin E2 receptor EP2 subtype (357 aa).

Residues 1 to 24 (MDNSFNDSRRVENCESRQYLLSDE) are Extracellular-facing. Asn6 carries an N-linked (GlcNAc...) asparagine glycan. A helical membrane pass occupies residues 25 to 48 (SPAISSVMFTAGVLGNLIALALLA). Residues 49 to 66 (RRWRGDTGCSAGSRTSIS) lie on the Cytoplasmic side of the membrane. The chain crosses the membrane as a helical span at residues 67–92 (LFHVLVTELVLTDLLGTCLISPVVLA). At 93–112 (SYSRNQTLVALAPESRACTY) the chain is on the extracellular side. A disulfide bridge links Cys110 with Cys188. A helical transmembrane segment spans residues 113–133 (FAFTMTFFSLATMLMLFAMAL). Residues 134 to 152 (ERYLAIGHPYFYRRRVSRR) lie on the Cytoplasmic side of the membrane. A helical membrane pass occupies residues 153–177 (GGLAVLPAIYGVSLLFCSLPLLNYG). Residues 178–199 (EYVQYCPGTWCFIQHGRTAYLQ) lie on the Extracellular side of the membrane. The helical transmembrane segment at 200–224 (LYATVLLLLIVAVLGCNISVILNLI) threads the bilayer. Topologically, residues 225-262 (RMQLRSKRSRCGLSGSSLRGPGSRRRGERTSMAEETDH) are cytoplasmic. Positions 235 to 245 (CGLSGSSLRGP) are enriched in low complexity. The interval 235–255 (CGLSGSSLRGPGSRRRGERTS) is disordered. The helical transmembrane segment at 263-286 (LILLAIMTITFAVCSLPFTIFAYM) threads the bilayer. At 287-299 (DETSSRKEKWDLR) the chain is on the extracellular side. Residues 300 to 323 (ALRFLSVNSIIDPWVFVILRPPVL) traverse the membrane as a helical segment. The Cytoplasmic segment spans residues 324 to 357 (RLMRSVLCCRTSLRAPEAPGASCSTQQTDLCGQL).

It belongs to the G-protein coupled receptor 1 family.

The protein localises to the cell membrane. In terms of biological role, receptor for prostaglandin E2 (PGE2). The activity of this receptor is mediated by G(s) proteins that stimulate adenylate cyclase. The subsequent raise in intracellular cAMP is responsible for the relaxing effect of this receptor on smooth muscle. This Rattus norvegicus (Rat) protein is Prostaglandin E2 receptor EP2 subtype (Ptger2).